The primary structure comprises 2289 residues: Protein Ycf2 (2289 aa).

1643-1650 (GSIGTGRS) serves as a coordination point for ATP.

It belongs to the Ycf2 family.

It is found in the plastid. Its subcellular location is the chloroplast stroma. In terms of biological role, probable ATPase of unknown function. Its presence in a non-photosynthetic plant (Epifagus virginiana) and experiments in tobacco indicate that it has an essential function which is probably not related to photosynthesis. The sequence is that of Protein Ycf2 from Capsella bursa-pastoris (Shepherd's purse).